The chain runs to 408 residues: Lysosomal phospholipase A and acyltransferase (408 aa).

The signal sequence occupies residues 1 to 31; it reads MGLRRGPCPAALLPGGFLFLLLLADPALLAG. Position 42 (Asp-42) interacts with substrate. Cysteines 61 and 85 form a disulfide. Asn-95 carries N-linked (GlcNAc...) asparagine glycosylation. The active-site Acyl-ester intermediate is the Ser-194. Zn(2+) is bound at residue Ser-194. Met-195 serves as a coordination point for substrate. N-linked (GlcNAc...) asparagine glycans are attached at residues Asn-269 and Asn-285. Asp-336 and Cys-351 together coordinate Zn(2+). Residues Asp-356 and His-388 each act as charge relay system in the active site. A Zn(2+)-binding site is contributed by His-388. Residue Asn-394 is glycosylated (N-linked (GlcNAc...) asparagine).

It belongs to the AB hydrolase superfamily. Lipase family. N-glycosylated. N-glycosylation is important for maturation of the enzyme and normal subcellular location.

Its subcellular location is the secreted. It localises to the lysosome. The protein resides in the membrane. It carries out the reaction a 1,2-diacyl-sn-glycero-3-phosphocholine + H2O = a 2-acyl-sn-glycero-3-phosphocholine + a fatty acid + H(+). It catalyses the reaction 1-hexadecanoyl-2-(9Z-octadecenoyl)-sn-glycero-3-phosphocholine + H2O = 2-(9Z-octadecenoyl)-sn-glycero-3-phosphocholine + hexadecanoate + H(+). The enzyme catalyses 1,2-di-(9Z-octadecenoyl)-sn-glycero-3-phosphocholine + H2O = 2-(9Z-octadecenoyl)-sn-glycero-3-phosphocholine + (9Z)-octadecenoate + H(+). The catalysed reaction is 1-hexadecanoyl-2-glutaroyl-sn-glycero-3-phosphocholine + H2O = 2-glutaroyl-sn-glycero-3-phosphocholine + hexadecanoate + H(+). It carries out the reaction 1-hexadecanoyl-2-nonadioyl-sn-glycero-3-phosphocholine + H2O = 2-nonadioyl-sn-glycero-3-phosphocholine + hexadecanoate + H(+). It catalyses the reaction 1-hexadecanoyl-2-(5-oxopentanoyl)-sn-glycero-3-phosphocholine + H2O = 2-(5-oxopentanoyl)-sn-glycero-3-phosphocholine + hexadecanoate + H(+). The enzyme catalyses 1-hexadecanoyl-2-(9-oxononanoyl)-sn-glycero-3-phosphocholine + H2O = 2-(9-oxononanoyl)-sn-glycero-3-phosphocholine + hexadecanoate + H(+). The catalysed reaction is 1,2-dihexadecanoyl-sn-glycero-3-phosphocholine + H2O = 2-hexadecanoyl-sn-glycero-3-phosphocholine + hexadecanoate + H(+). It carries out the reaction a 1,2-diacyl-sn-glycero-3-phosphocholine + H2O = a 1-acyl-sn-glycero-3-phosphocholine + a fatty acid + H(+). It catalyses the reaction 1-hexadecanoyl-2-(9Z-octadecenoyl)-sn-glycero-3-phosphocholine + H2O = 1-hexadecanoyl-sn-glycero-3-phosphocholine + (9Z)-octadecenoate + H(+). The enzyme catalyses 1,2-di-(9Z-octadecenoyl)-sn-glycero-3-phosphocholine + H2O = 1-(9Z-octadecenoyl)-sn-glycero-3-phosphocholine + (9Z)-octadecenoate + H(+). The catalysed reaction is 1,2-dihexadecanoyl-sn-glycero-3-phosphocholine + H2O = 1-hexadecanoyl-sn-glycero-3-phosphocholine + hexadecanoate + H(+). It carries out the reaction a 1-acyl-sn-glycero-3-phosphocholine + H2O = sn-glycerol 3-phosphocholine + a fatty acid + H(+). It catalyses the reaction 1-hexadecanoyl-sn-glycero-3-phosphocholine + H2O = sn-glycerol 3-phosphocholine + hexadecanoate + H(+). The enzyme catalyses N-(acetyl)-sphing-4-enine + a 1,2-diacyl-sn-glycero-3-phosphoethanolamine = 1-O-acyl-N-(acetyl)-sphing-4-enine + a 2-acyl-sn-glycero-3-phosphoethanolamine. The catalysed reaction is 1-hexadecanoyl-2-(9Z-octadecenoyl)-sn-glycero-3-phosphoethanolamine + N-(acetyl)-sphing-4-enine = 2-(9Z-octadecenoyl)-sn-glycero-3-phosphoethanolamine + 1-hexadecanoyl-N-(acetyl)-sphing-4-enine. It carries out the reaction 1-hexadecanoyl-2-(9Z,12Z-octadecadienoyl)-sn-glycero-3-phosphoethanolamine + N-(acetyl)-sphing-4-enine = 2-(9Z,12Z)-octadecadienoyl-sn-glycero-3-phosphoethanolamine + 1-hexadecanoyl-N-(acetyl)-sphing-4-enine. It catalyses the reaction 1-hexadecanoyl-2-(5Z,8Z,11Z,14Z-eicosatetraenoyl)-sn-glycero-3-phosphoethanolamine + N-(acetyl)-sphing-4-enine = 2-(5Z,8Z,11Z,14Z)-eicosatetraenoyl-sn-glycero-3-phosphoethanolamine + 1-hexadecanoyl-N-(acetyl)-sphing-4-enine. The enzyme catalyses N-(acetyl)-sphing-4-enine + a 1,2-diacyl-sn-glycero-3-phosphoethanolamine = 1-O-acyl-N-(acetyl)-sphing-4-enine + a 1-acyl-sn-glycero-3-phosphoethanolamine. The catalysed reaction is 1-hexadecanoyl-2-(9Z-octadecenoyl)-sn-glycero-3-phosphoethanolamine + N-(acetyl)-sphing-4-enine = 1-(9Z-octadecenoyl)-N-(acetyl)-sphing-4-enine + 1-hexadecanoyl-sn-glycero-3-phosphoethanolamine. It carries out the reaction 1-hexadecanoyl-2-(9Z,12Z-octadecadienoyl)-sn-glycero-3-phosphoethanolamine + N-(acetyl)-sphing-4-enine = 1-(9Z,12Z-octadecadienoyl)-N-acetylsphing-4-enine + 1-hexadecanoyl-sn-glycero-3-phosphoethanolamine. It catalyses the reaction 1-hexadecanoyl-2-(5Z,8Z,11Z,14Z-eicosatetraenoyl)-sn-glycero-3-phosphoethanolamine + N-(acetyl)-sphing-4-enine = 1-(5Z,8Z,11Z,14Z)-eicosatetraenoyl-N-(acetyl)-sphing-4-enine + 1-hexadecanoyl-sn-glycero-3-phosphoethanolamine. The enzyme catalyses N-(acetyl)-sphing-4-enine + a 1,2-diacyl-sn-glycero-3-phosphocholine = 1-O-acyl-N-(acetyl)-sphing-4-enine + a 2-acyl-sn-glycero-3-phosphocholine. The catalysed reaction is 1-hexadecanoyl-2-(9Z-octadecenoyl)-sn-glycero-3-phosphocholine + N-(acetyl)-sphing-4-enine = 1-hexadecanoyl-N-(acetyl)-sphing-4-enine + 2-(9Z-octadecenoyl)-sn-glycero-3-phosphocholine. It carries out the reaction 1-hexadecanoyl-2-(9Z,12Z-octadecadienoyl)-sn-glycero-3-phosphocholine + N-(acetyl)-sphing-4-enine = 2-(9Z,12Z-octadecadienoyl)-sn-glycero-3-phosphocholine + 1-hexadecanoyl-N-(acetyl)-sphing-4-enine. It catalyses the reaction 1-hexadecanoyl-2-(5Z,8Z,11Z,14Z-eicosatetraenoyl)-sn-glycero-3-phosphocholine + N-(acetyl)-sphing-4-enine = 1-hexadecanoyl-N-(acetyl)-sphing-4-enine + 2-(5Z,8Z,11Z,14Z)-eicosatetraenoyl-sn-glycero-3-phosphocholine. The enzyme catalyses 1-hexadecanoyl-2-(4Z,7Z,10Z,13Z,16Z,19Z-docosahexaenoyl)-sn-glycero-3-phosphocholine + N-(acetyl)-sphing-4-enine = 2-(4Z,7Z,10Z,13Z,16Z,19Z-docosahexaenoyl)-sn-glycero-3-phosphocholine + 1-hexadecanoyl-N-(acetyl)-sphing-4-enine. The catalysed reaction is 1-hexadecanoyl-2-nonadioyl-sn-glycero-3-phosphocholine + N-(acetyl)-sphing-4-enine = 2-nonadioyl-sn-glycero-3-phosphocholine + 1-hexadecanoyl-N-(acetyl)-sphing-4-enine. It carries out the reaction 1-octadecanoyl-2-(9Z-octadecenoyl)-sn-glycero-3-phosphocholine + N-(acetyl)-sphing-4-enine = 1-octadecanoyl-N-(acetyl)-sphing-4-enine + 2-(9Z-octadecenoyl)-sn-glycero-3-phosphocholine. It catalyses the reaction 1-(9Z)-octadecenoyl-2-octadecanoyl-sn-glycero-3-phosphocholine + N-(acetyl)-sphing-4-enine = 2-octadecanoyl-sn-glycero-3-phosphocholine + 1-(9Z-octadecenoyl)-N-(acetyl)-sphing-4-enine. The enzyme catalyses 1-octadecanoyl-2-(5Z,8Z,11Z,14Z-eicosatetraenoyl)-sn-glycero-3-phosphocholine + N-(acetyl)-sphing-4-enine = 1-octadecanoyl-N-(acetyl)-sphing-4-enine + 2-(5Z,8Z,11Z,14Z)-eicosatetraenoyl-sn-glycero-3-phosphocholine. The catalysed reaction is 1-(9Z-octadecenoyl)-2-hexadecanoyl-sn-glycero-3-phosphocholine + N-(acetyl)-sphing-4-enine = 1-(9Z-octadecenoyl)-N-(acetyl)-sphing-4-enine + 2-hexadecanoyl-sn-glycero-3-phosphocholine. It carries out the reaction N-(acetyl)-sphing-4-enine + a 1,2-diacyl-sn-glycero-3-phosphocholine = 1-O-acyl-N-(acetyl)-sphing-4-enine + a 1-acyl-sn-glycero-3-phosphocholine. It catalyses the reaction 1-hexadecanoyl-2-(9Z-octadecenoyl)-sn-glycero-3-phosphocholine + N-(acetyl)-sphing-4-enine = 1-(9Z-octadecenoyl)-N-(acetyl)-sphing-4-enine + 1-hexadecanoyl-sn-glycero-3-phosphocholine. The enzyme catalyses 1-hexadecanoyl-2-(9Z,12Z-octadecadienoyl)-sn-glycero-3-phosphocholine + N-(acetyl)-sphing-4-enine = 1-(9Z,12Z-octadecadienoyl)-N-acetylsphing-4-enine + 1-hexadecanoyl-sn-glycero-3-phosphocholine. The catalysed reaction is 1-hexadecanoyl-2-(5Z,8Z,11Z,14Z-eicosatetraenoyl)-sn-glycero-3-phosphocholine + N-(acetyl)-sphing-4-enine = 1-(5Z,8Z,11Z,14Z)-eicosatetraenoyl-N-(acetyl)-sphing-4-enine + 1-hexadecanoyl-sn-glycero-3-phosphocholine. It carries out the reaction 1-hexadecanoyl-2-(4Z,7Z,10Z,13Z,16Z,19Z-docosahexaenoyl)-sn-glycero-3-phosphocholine + N-(acetyl)-sphing-4-enine = 1-(4Z,7Z,10Z,13Z,16Z,19Z-docosahexaenoyl)-N-(acetyl)-sphing-4-enine + 1-hexadecanoyl-sn-glycero-3-phosphocholine. It catalyses the reaction 1-octadecanoyl-2-(9Z-octadecenoyl)-sn-glycero-3-phosphocholine + N-(acetyl)-sphing-4-enine = 1-(9Z-octadecenoyl)-N-(acetyl)-sphing-4-enine + 1-octadecanoyl-sn-glycero-3-phosphocholine. The enzyme catalyses 1-octadecanoyl-2-(9Z,12Z)-octadecadienoyl-sn-glycero-3-phosphocholine + N-(acetyl)-sphing-4-enine = 1-(9Z,12Z-octadecadienoyl)-N-acetylsphing-4-enine + 1-octadecanoyl-sn-glycero-3-phosphocholine. The catalysed reaction is 1-(9Z-octadecenoyl)-2-hexadecanoyl-sn-glycero-3-phosphocholine + N-(acetyl)-sphing-4-enine = 1-hexadecanoyl-N-(acetyl)-sphing-4-enine + 1-(9Z-octadecenoyl)-sn-glycero-3-phosphocholine. It carries out the reaction 1-(9Z)-octadecenoyl-2-octadecanoyl-sn-glycero-3-phosphocholine + N-(acetyl)-sphing-4-enine = 1-octadecanoyl-N-(acetyl)-sphing-4-enine + 1-(9Z-octadecenoyl)-sn-glycero-3-phosphocholine. It catalyses the reaction 1,2-di-(9Z-octadecenoyl)-sn-glycero-3-phosphocholine + N-(acetyl)-sphing-4-enine = 1-(9Z-octadecenoyl)-N-(acetyl)-sphing-4-enine + 1-(9Z-octadecenoyl)-sn-glycero-3-phosphocholine. The enzyme catalyses 1-octadecanoyl-2-(5Z,8Z,11Z,14Z-eicosatetraenoyl)-sn-glycero-3-phosphocholine + N-(acetyl)-sphing-4-enine = 1-(5Z,8Z,11Z,14Z)-eicosatetraenoyl-N-(acetyl)-sphing-4-enine + 1-octadecanoyl-sn-glycero-3-phosphocholine. The catalysed reaction is a 1,2-diacyl-sn-glycero-3-phospho-L-serine + N-(acetyl)-sphing-4-enine = a 2-acyl-sn-glycero-3-phospho-L-serine + 1-O-acyl-N-(acetyl)-sphing-4-enine. It carries out the reaction 1-octadecanoyl-2-(9Z-octadecenoyl)-sn-glycero-3-phospho-L-serine + N-(acetyl)-sphing-4-enine = 2-(9Z-octadecenoyl)-sn-glycero-3-phospho-L-serine + 1-octadecanoyl-N-(acetyl)-sphing-4-enine. It catalyses the reaction a 1,2-diacyl-sn-glycero-3-phospho-L-serine + N-(acetyl)-sphing-4-enine = 1-O-acyl-N-(acetyl)-sphing-4-enine + a 1-acyl-sn-glycero-3-phospho-L-serine. The enzyme catalyses 1-octadecanoyl-2-(9Z-octadecenoyl)-sn-glycero-3-phospho-L-serine + N-(acetyl)-sphing-4-enine = 1-octadecanoyl-sn-glycero-3-phosphoserine + 1-(9Z-octadecenoyl)-N-(acetyl)-sphing-4-enine. The catalysed reaction is a 1,2-diacyl-sn-glycero-3-phospho-(1'-sn-glycerol) + N-(acetyl)-sphing-4-enine = 2-acyl-sn-glycero-3-phospho-(1'-sn-glycerol) + 1-O-acyl-N-(acetyl)-sphing-4-enine. It carries out the reaction 1-octadecanoyl-2-(9Z-octadecenoyl)-sn-glycero-3-phospho-(1'-sn-glycerol) + N-(acetyl)-sphing-4-enine = 2-(9Z-octadecenoyl)-sn-glycero-3-phospho-(1'-sn-glycerol) + 1-octadecanoyl-N-(acetyl)-sphing-4-enine. It catalyses the reaction a 1,2-diacyl-sn-glycero-3-phospho-(1'-sn-glycerol) + N-(acetyl)-sphing-4-enine = 1-O-acyl-N-(acetyl)-sphing-4-enine + 1-acyl-sn-glycero-3-phospho-(1'-sn-glycerol). The enzyme catalyses 1-octadecanoyl-2-(9Z-octadecenoyl)-sn-glycero-3-phospho-(1'-sn-glycerol) + N-(acetyl)-sphing-4-enine = 1-octadecanoyl-sn-glycero-3-phospho-(1'-sn-glycerol) + 1-(9Z-octadecenoyl)-N-(acetyl)-sphing-4-enine. The catalysed reaction is an N-acylethanolamine + a 1,2-diacyl-sn-glycero-3-phosphocholine = 2-(acylamino)ethyl fatty acid + a 2-acyl-sn-glycero-3-phosphocholine. It carries out the reaction an N-acylethanolamine + a 1,2-diacyl-sn-glycero-3-phosphocholine = 2-(acylamino)ethyl fatty acid + a 1-acyl-sn-glycero-3-phosphocholine. It catalyses the reaction N-(5Z,8Z,11Z,14Z-eicosatetraenoyl)-ethanolamine + 1,2-di-(9Z-octadecenoyl)-sn-glycero-3-phosphocholine = 2-[(5Z,8Z,11Z,14Z)-eicosatetraenoylamino]ethyl (9Z)-octadecenoate + (9Z-octadecenoyl)-sn-glycero-3-phosphocholine. The enzyme catalyses N-(9Z-octadecenoyl) ethanolamine + 1,2-di-(9Z-octadecenoyl)-sn-glycero-3-phosphocholine = 2-[(9Z)-octadecenoylamino]ethyl (9Z)-octadecenoate + (9Z-octadecenoyl)-sn-glycero-3-phosphocholine. The catalysed reaction is a 3-acyl-sn-glycerol + a 1,2-diacyl-sn-glycero-3-phosphocholine = a 1,3-diacylglycerol + a 1-acyl-sn-glycero-3-phosphocholine. It carries out the reaction a 3-acyl-sn-glycerol + a 1,2-diacyl-sn-glycero-3-phosphocholine = a 1,3-diacylglycerol + a 2-acyl-sn-glycero-3-phosphocholine. It catalyses the reaction 3-(9Z-octadecenoyl)-sn-glycerol + 1,2-di-(9Z-octadecenoyl)-sn-glycero-3-phosphocholine = 1,3-di-(9Z-octadecenoyl)-glycerol + (9Z-octadecenoyl)-sn-glycero-3-phosphocholine. The enzyme catalyses 3-hexadecanoyl-sn-glycerol + 1,2-di-(9Z-octadecenoyl)-sn-glycero-3-phosphocholine = 1-(9Z)-octadecenoyl-3-hexadecanoyl-sn-glycerol + (9Z-octadecenoyl)-sn-glycero-3-phosphocholine. The catalysed reaction is a 1-acyl-sn-glycerol + a 1,2-diacyl-sn-glycero-3-phosphocholine = a 1,3-diacylglycerol + a 2-acyl-sn-glycero-3-phosphocholine. It carries out the reaction a 1-acyl-sn-glycerol + a 1,2-diacyl-sn-glycero-3-phosphocholine = a 1,3-diacylglycerol + a 1-acyl-sn-glycero-3-phosphocholine. It catalyses the reaction 1-(9Z-octadecenoyl)-sn-glycerol + 1,2-di-(9Z-octadecenoyl)-sn-glycero-3-phosphocholine = 1,3-di-(9Z-octadecenoyl)-glycerol + (9Z-octadecenoyl)-sn-glycero-3-phosphocholine. The enzyme catalyses 1-hexadecanoyl-sn-glycerol + 1,2-di-(9Z-octadecenoyl)-sn-glycero-3-phosphocholine = 1-hexadecanoyl-3-(9Z)-octadecenoyl-sn-glycerol + (9Z-octadecenoyl)-sn-glycero-3-phosphocholine. The catalysed reaction is a 2-acylglycerol + a 1,2-diacyl-sn-glycero-3-phosphocholine = a 1,2-diacylglycerol + a 2-acyl-sn-glycero-3-phosphocholine. It carries out the reaction a 2-acylglycerol + a 1,2-diacyl-sn-glycero-3-phosphocholine = a 1,2-diacylglycerol + a 1-acyl-sn-glycero-3-phosphocholine. It catalyses the reaction 2-hexadecanoylglycerol + 1,2-di-(9Z-octadecenoyl)-sn-glycero-3-phosphocholine = 1-(9Z)-octadecenoyl-2-hexadecanoylglycerol + (9Z-octadecenoyl)-sn-glycero-3-phosphocholine. The enzyme catalyses 1-O-alkylglycerol + a 1,2-diacyl-sn-glycero-3-phosphocholine = 1-O-alkyl-3-acylglycerol + a 1-acyl-sn-glycero-3-phosphocholine. The catalysed reaction is 1-O-alkylglycerol + a 1,2-diacyl-sn-glycero-3-phosphocholine = 1-O-alkyl-3-acylglycerol + a 2-acyl-sn-glycero-3-phosphocholine. It carries out the reaction 1-O-hexadecylglycerol + 1,2-di-(9Z-octadecenoyl)-sn-glycero-3-phosphocholine = 1-O-hexadecyl-3-(9Z)-octadecenoylglycerol + (9Z-octadecenoyl)-sn-glycero-3-phosphocholine. It catalyses the reaction 1-O-alkyl-2-acyl-sn-glycerol + a 1,2-diacyl-sn-glycero-3-phosphocholine = 1-O-alkyl-2,3-diacyl-sn-glycerol + a 2-acyl-sn-glycero-3-phosphocholine. The enzyme catalyses 1-O-alkyl-2-acyl-sn-glycerol + a 1,2-diacyl-sn-glycero-3-phosphocholine = 1-O-alkyl-2,3-diacyl-sn-glycerol + a 1-acyl-sn-glycero-3-phosphocholine. The catalysed reaction is 1-O-hexadecyl-2-acetyl-sn-glycerol + 1,2-di-(9Z-octadecenoyl)-sn-glycero-3-phosphocholine = 1-O-hexadecyl-2-acetyl-3-(9Z)-octadecenoyl-sn-glycerol + (9Z-octadecenoyl)-sn-glycero-3-phosphocholine. It carries out the reaction 1-O-hexadecyl-2-O-methyl-sn-glycerol + 1,2-di-(9Z-octadecenoyl)-sn-glycero-3-phosphocholine = 1-O-hexadecyl-2-O-methyl-3-(9Z)-octadecenoyl-sn-glycerol + (9Z-octadecenoyl)-sn-glycero-3-phosphocholine. It catalyses the reaction a 1,2-diacyl-sn-glycero-3-phosphoethanolamine + H2O = a 1-acyl-sn-glycero-3-phosphoethanolamine + a fatty acid + H(+). The enzyme catalyses 1-acyl-2-(5Z,8Z,11Z,14Z)-eicosatetraenoyl-sn-glycero-3-phosphoethanolamine + H2O = a 1-acyl-sn-glycero-3-phosphoethanolamine + (5Z,8Z,11Z,14Z)-eicosatetraenoate + H(+). The catalysed reaction is a 1,2-diacyl-sn-glycero-3-phospho-(1'-sn-glycerol) + H2O = 1-acyl-sn-glycero-3-phospho-(1'-sn-glycerol) + a fatty acid + H(+). It carries out the reaction 1-hexadecanoyl-2-(9Z-octadecenoyl)-sn-glycero-3-phospho-(1'-sn-glycerol) + H2O = 1-hexadecanoyl-sn-glycero-3-phospho-(1'-sn-glycerol) + (9Z)-octadecenoate + H(+). It catalyses the reaction a 1,2-diacyl-sn-glycero-3-phospho-(1'-sn-glycerol) + H2O = 2-acyl-sn-glycero-3-phospho-(1'-sn-glycerol) + a fatty acid + H(+). The enzyme catalyses 1-hexadecanoyl-2-(9Z-octadecenoyl)-sn-glycero-3-phospho-(1'-sn-glycerol) + H2O = 2-(9Z-octadecenoyl)-sn-glycero-3-phospho-(1'-sn-glycerol) + hexadecanoate + H(+). Has dual calcium-independent phospholipase and O-acyltransferase activities with a potential role in glycerophospholipid homeostasis and remodeling of acyl groups of lipophilic alcohols present in acidic cellular compartments. Catalyzes hydrolysis of the ester bond of the fatty acyl group attached at sn-1 or sn-2 position of phospholipids (phospholipase A1 or A2 activity) and transfer it to the hydroxyl group at the first carbon of lipophilic alcohols (O-acyltransferase activity). Among preferred fatty acyl donors are phosphatidylcholines, phosphatidylethanolamines, phosphatidylglycerols and phosphatidylserines. Favors sn-2 over sn-1 deacylation of unsaturated fatty acyl groups of phosphatidylcholines, phosphatidylethanolamines, and phosphatidylglycerols. Among preferred fatty acyl acceptors are natural lipophilic alcohols including short-chain ceramide N-acetyl-sphingosine (C2 ceramide), alkylacylglycerols, monoacylglycerols, and acylethanolamides such as anandamide and oleoylethanolamide. Selectively hydrolyzes the sn-1 fatty acyl group of truncated oxidized phospholipids and may play a role in detoxification of reactive oxidized phospholipids during oxidative stress. Required for normal phospholipid degradation in alveolar macrophages with potential implications in the clearance of pulmonary surfactant, which is mainly composed of dipalmitoylphosphatidylcholine (1,2-dihexadecanoyl-sn-glycero-3-phosphocholine). Involved in the first step of bis(monoacylglycero)phosphate (BMP) de novo synthesis from phosphatidylglycerol (1,2-diacyl-sn-glycero-3-phospho-(1'-sn-glycerol), PG). BMP is an important player in cargo sorting and degradation, regulation of cellular cholesterol levels and intercellular communication. At neutral pH, hydrolyzes the sn-1 fatty acyl group of the lysophosphatidylcholines. This is Lysosomal phospholipase A and acyltransferase (PLA2G15) from Canis lupus familiaris (Dog).